The following is a 503-amino-acid chain: Cytochrome c-552 (503 aa).

An N-terminal signal peptide occupies residues 1–16 (MKKNTIILVGALIAIA). His102 contributes to the heme c binding site. Positions 130, 133, and 134 each coordinate heme. Positions 168, 171, 172, 210, 213, and 214 each coordinate heme c. 4 residues coordinate Ca(2+): Glu216, Tyr217, Lys273, and Gln275. Tyr217 serves as a coordination point for substrate. Substrate is bound at residue His276. Residues His287, Cys294, Cys297, His298, His312, Cys325, Cys328, His329, and His404 each contribute to the heme c site.

This sequence belongs to the cytochrome c-552 family. The cofactor is Ca(2+). It depends on heme c as a cofactor.

The protein resides in the periplasm. The catalysed reaction is 6 Fe(III)-[cytochrome c] + NH4(+) + 2 H2O = 6 Fe(II)-[cytochrome c] + nitrite + 8 H(+). It participates in nitrogen metabolism; nitrate reduction (assimilation). Functionally, catalyzes the reduction of nitrite to ammonia, consuming six electrons in the process. This chain is Cytochrome c-552, found in Maridesulfovibrio salexigens (strain ATCC 14822 / DSM 2638 / NCIMB 8403 / VKM B-1763) (Desulfovibrio salexigens).